Here is a 64-residue protein sequence, read N- to C-terminus: Large ribosomal subunit protein bL33 (64 aa).

Belongs to the bacterial ribosomal protein bL33 family.

This is Large ribosomal subunit protein bL33 from Nostoc punctiforme (strain ATCC 29133 / PCC 73102).